We begin with the raw amino-acid sequence, 187 residues long: ATP synthase subunit b 2 (187 aa).

Polar residues predominate over residues 1–13 (MAESHATGTTTHT). The segment at 1–21 (MAESHATGTTTHTEVPHGKPE) is disordered. A helical transmembrane segment spans residues 31 to 53 (ASQLVSFAIAFALLYVIVSRFAL).

The protein belongs to the ATPase B chain family. As to quaternary structure, F-type ATPases have 2 components, F(1) - the catalytic core - and F(0) - the membrane proton channel. F(1) has five subunits: alpha(3), beta(3), gamma(1), delta(1), epsilon(1). F(0) has three main subunits: a(1), b(2) and c(10-14). The alpha and beta chains form an alternating ring which encloses part of the gamma chain. F(1) is attached to F(0) by a central stalk formed by the gamma and epsilon chains, while a peripheral stalk is formed by the delta and b chains.

It is found in the cell inner membrane. F(1)F(0) ATP synthase produces ATP from ADP in the presence of a proton or sodium gradient. F-type ATPases consist of two structural domains, F(1) containing the extramembraneous catalytic core and F(0) containing the membrane proton channel, linked together by a central stalk and a peripheral stalk. During catalysis, ATP synthesis in the catalytic domain of F(1) is coupled via a rotary mechanism of the central stalk subunits to proton translocation. Functionally, component of the F(0) channel, it forms part of the peripheral stalk, linking F(1) to F(0). The b'-subunit is a diverged and duplicated form of b found in plants and photosynthetic bacteria. This Afipia carboxidovorans (strain ATCC 49405 / DSM 1227 / KCTC 32145 / OM5) (Oligotropha carboxidovorans) protein is ATP synthase subunit b 2 (atpF2).